The following is an 885-amino-acid chain: Leucine--tRNA ligase (885 aa).

Positions 46–56 (PYPSGALHMGH) match the 'HIGH' region motif. The 'KMSKS' region signature appears at 638–642 (KMSKS). An ATP-binding site is contributed by Lys641.

The protein belongs to the class-I aminoacyl-tRNA synthetase family.

It localises to the cytoplasm. The catalysed reaction is tRNA(Leu) + L-leucine + ATP = L-leucyl-tRNA(Leu) + AMP + diphosphate. The polypeptide is Leucine--tRNA ligase (Xanthomonas campestris pv. campestris (strain B100)).